The following is a 248-amino-acid chain: MADS-box transcription factor 8 (248 aa).

In terms of domain architecture, MADS-box spans 1-61 (MGRGRVELKR…GKLYEFCSGQ (61 aa)). The K-box domain maps to 90–180 (VQSSRNEYLK…RRKLEESNQL (91 aa)).

As to quaternary structure, may interact with the K-box of MADS6 and MADS16. May interact with MADS13 and MADS18. Binds to FCA. Expressed in lodicules, stamens and carpels.

It localises to the nucleus. Its function is as follows. Probable transcription factor. May be involved in the control of flowering time. In Oryza sativa subsp. japonica (Rice), this protein is MADS-box transcription factor 8 (MADS8).